The sequence spans 217 residues: ATP phosphoribosyltransferase (217 aa).

It belongs to the ATP phosphoribosyltransferase family. Short subfamily. In terms of assembly, heteromultimer composed of HisG and HisZ subunits.

It is found in the cytoplasm. The enzyme catalyses 1-(5-phospho-beta-D-ribosyl)-ATP + diphosphate = 5-phospho-alpha-D-ribose 1-diphosphate + ATP. It functions in the pathway amino-acid biosynthesis; L-histidine biosynthesis; L-histidine from 5-phospho-alpha-D-ribose 1-diphosphate: step 1/9. Functionally, catalyzes the condensation of ATP and 5-phosphoribose 1-diphosphate to form N'-(5'-phosphoribosyl)-ATP (PR-ATP). Has a crucial role in the pathway because the rate of histidine biosynthesis seems to be controlled primarily by regulation of HisG enzymatic activity. The chain is ATP phosphoribosyltransferase from Burkholderia orbicola (strain AU 1054).